A 387-amino-acid polypeptide reads, in one-letter code: Phosphoglycerate kinase (387 aa).

Substrate is bound by residues 21-23 (DLN), R36, 59-62 (HLGR), R113, and R146. Residues K197, E314, and 340–343 (GGDT) contribute to the ATP site.

The protein belongs to the phosphoglycerate kinase family. As to quaternary structure, monomer.

It is found in the cytoplasm. It carries out the reaction (2R)-3-phosphoglycerate + ATP = (2R)-3-phospho-glyceroyl phosphate + ADP. It functions in the pathway carbohydrate degradation; glycolysis; pyruvate from D-glyceraldehyde 3-phosphate: step 2/5. The sequence is that of Phosphoglycerate kinase from Aliivibrio fischeri (strain MJ11) (Vibrio fischeri).